Here is a 154-residue protein sequence, read N- to C-terminus: Myoglobin (154 aa).

One can recognise a Globin domain in the interval 2–148 (GLSDGEWQSV…FRNDIAAKYK (147 aa)). Ser4 is modified (phosphoserine). His65 lines the nitrite pocket. His65 is an O2 binding site. Phosphothreonine is present on Thr68. His94 is a binding site for heme b.

This sequence belongs to the globin family. In terms of assembly, monomeric.

It localises to the cytoplasm. Its subcellular location is the sarcoplasm. The catalysed reaction is Fe(III)-heme b-[protein] + nitric oxide + H2O = Fe(II)-heme b-[protein] + nitrite + 2 H(+). It carries out the reaction H2O2 + AH2 = A + 2 H2O. Functionally, monomeric heme protein which primary function is to store oxygen and facilitate its diffusion within muscle tissues. Reversibly binds oxygen through a pentacoordinated heme iron and enables its timely and efficient release as needed during periods of heightened demand. Depending on the oxidative conditions of tissues and cells, and in addition to its ability to bind oxygen, it also has a nitrite reductase activity whereby it regulates the production of bioactive nitric oxide. Under stress conditions, like hypoxia and anoxia, it also protects cells against reactive oxygen species thanks to its pseudoperoxidase activity. This is Myoglobin (MB) from Perodicticus potto edwarsi (Potto).